Consider the following 700-residue polypeptide: Dipeptidyl aminopeptidase 1 (700 aa).

A signal peptide spans 1-27 (MAKRIFSVSFLLVLLNVLHICIKFSVA). Residues Asn-52, Asn-144, Asn-265, Asn-337, and Asn-373 are each glycosylated (N-linked (GlcNAc...) asparagine). Residues 210 to 369 (DNVNEIKHLD…SPKRELEINE (160 aa)) constitute a propeptide that is removed on maturation. 2 disulfide bridges follow: Cys-395-Cys-446 and Cys-439-Cys-478. Cys-398 is an active-site residue. Sulfothreonine is present on Thr-416. Phe-450 and Tyr-452 together coordinate chloride. Asn-481, Asn-490, and Asn-507 each carry an N-linked (GlcNAc...) asparagine glycan. Tyr-549 lines the chloride pocket. N-linked (GlcNAc...) asparagine glycosylation occurs at Asn-615. Residues His-624 and Asn-648 contribute to the active site. N-linked (GlcNAc...) asparagine glycosylation occurs at Asn-667.

This sequence belongs to the peptidase C1 family. Monomer. Requires chloride as cofactor.

Its subcellular location is the vacuole lumen. It is found in the parasitophorous vacuole lumen. It catalyses the reaction Release of an N-terminal dipeptide, Xaa-Yaa-|-Zaa-, except when Xaa is Arg or Lys, or Yaa or Zaa is Pro.. Thiol protease that cleaves dipeptides from the N-terminus of protein substrates. Active against a broad range of dipeptide substrates composed of both polar and hydrophobic amino acids. Proline cannot occupy the P1 position and arginine or lysine cannot occupy the P2 position of the substrate. Involved in host hemoglobin degradation by generating dipeptides from hemoglobin-derived oligopeptides. This Plasmodium falciparum (isolate 3D7) protein is Dipeptidyl aminopeptidase 1.